The chain runs to 31 residues: Cytochrome b6-f complex subunit 6 (31 aa).

A helical membrane pass occupies residues 4 to 26 (LTSYFGFLLAALTITSALFIGLS).

It belongs to the PetL family. The 4 large subunits of the cytochrome b6-f complex are cytochrome b6, subunit IV (17 kDa polypeptide, PetD), cytochrome f and the Rieske protein, while the 4 small subunits are PetG, PetL, PetM and PetN. The complex functions as a dimer.

The protein resides in the plastid. It localises to the chloroplast thylakoid membrane. Functionally, component of the cytochrome b6-f complex, which mediates electron transfer between photosystem II (PSII) and photosystem I (PSI), cyclic electron flow around PSI, and state transitions. PetL is important for photoautotrophic growth as well as for electron transfer efficiency and stability of the cytochrome b6-f complex. This Aethionema cordifolium (Lebanon stonecress) protein is Cytochrome b6-f complex subunit 6.